A 539-amino-acid chain; its full sequence is Sorting nexin-27 (539 aa).

Residues 1–40 (MADEDGEGIHPSAPHRNGGGGGGSGLHCAGNGGGGGGGPR) form a disordered region. The span at 17–39 (NGGGGGGSGLHCAGNGGGGGGGP) shows a compositional bias: gly residues. The region spanning 41-134 (VVRIVKSESG…ELILTVLSVP (94 aa)) is the PDZ domain. Phosphoserine occurs at positions 49 and 60. Residues 159-267 (QAVPISVPTY…EFLSESDENY (109 aa)) enclose the PX domain. The region spanning 271-360 (SDVELRVALP…TCLTIRKWLF (90 aa)) is the Ras-associating domain. Residues 271–360 (SDVELRVALP…TCLTIRKWLF (90 aa)) form an FERM-like region F1 region. Positions 371–419 (NDLAVTYFFHQAVDDVKKGYIKAEEKSYQLQKLHEQRKMVMYLNMLRTC) are FERM-like region F2. Residues 423–523 (NEIIFPHCAC…RVFCELKWRK (101 aa)) are FERM-like region F3.

As to quaternary structure, core component of the SNX27-retromer, a multiprotein complex composed of SNX27, the WASH complex and the retromer complex. Interacts (via the FERM-like regions) with the WASH complex. Interacts with SNX1. Interacts with CYTIP. Interacts with DGKZ. Interacts with MCC. Interacts (via PDZ domain) with a number of target transmembrane proteins (via PDZ-binding motif): ABCC4, ADRB2, ARHGEF7, GRIA1, GRIA2, GRIN1, GRIN2A GRIN2C, KCNJ6, KCNJ9 and SLC2A1/GLUT1. Interacts (via PDZ domains) with SLC9A3; directs SLC9A3 membrane insertion from early endosomes to the plasma membrane. In terms of tissue distribution, expressed in cells of hematopoietic origin.

It localises to the early endosome membrane. It is found in the cytoplasm. The protein localises to the cytosol. Involved in the retrograde transport from endosome to plasma membrane, a trafficking pathway that promotes the recycling of internalized transmembrane proteins. Following internalization, endocytosed transmembrane proteins are delivered to early endosomes and recycled to the plasma membrane instead of being degraded in lysosomes. SNX27 specifically binds and directs sorting of a subset of transmembrane proteins containing a PDZ-binding motif at the C-terminus: following interaction with target transmembrane proteins, associates with the retromer complex, preventing entry into the lysosomal pathway, and promotes retromer-tubule based plasma membrane recycling. SNX27 also binds with the WASH complex. Interacts with membranes containing phosphatidylinositol-3-phosphate (PtdIns(3P)). May participate in establishment of natural killer cell polarity. Recruits CYTIP to early endosomes. In Mus musculus (Mouse), this protein is Sorting nexin-27 (Snx27).